The following is a 300-amino-acid chain: Putative 1-phosphofructokinase (300 aa).

Residues 214-219 and 246-247 contribute to the ATP site; these read SDGAQG and GD. The active-site Proton acceptor is the aspartate 247.

Belongs to the carbohydrate kinase PfkB family.

It carries out the reaction beta-D-fructose 1-phosphate + ATP = beta-D-fructose 1,6-bisphosphate + ADP + H(+). Functionally, catalyzes the ATP-dependent phosphorylation of fructose-l-phosphate to fructose-l,6-bisphosphate. The protein is Putative 1-phosphofructokinase (fruK) of Mycoplasma pneumoniae (strain ATCC 29342 / M129 / Subtype 1) (Mycoplasmoides pneumoniae).